A 279-amino-acid chain; its full sequence is Protein phosphatase 1 regulatory subunit 3E (279 aa).

Residues Ser16 and Ser33 each carry the phosphoserine modification. Residues 28-89 (RSQRPSLEEE…RSPDTRKRVR (62 aa)) form a disordered region. Residues 51–65 (ARSRAHVPGRGRRAR) show a composition bias toward basic residues. At Ser66 the chain carries Phosphoserine. Positions 87–90 (RVRF) match the PP1-binding motif motif. The CBM21 domain maps to 154-259 (AARLQAQRIC…NNGGRDYALL (106 aa)). The interval 176–198 (GSARVLDLAYEKRVSVRWSADGW) is glycogen-binding motif. A substrate-binding motif region spans residues 248-256 (WDNNGGRDY).

In terms of tissue distribution, expressed in liver and heart, with low levels in skeletal muscle.

Functionally, acts as a glycogen-targeting subunit for PP1. PP1 is involved in glycogen metabolism and contributes to the activation of glycogen synthase leading to an increase in glycogen synthesis. In Rattus norvegicus (Rat), this protein is Protein phosphatase 1 regulatory subunit 3E (Ppp1r3e).